Here is a 373-residue protein sequence, read N- to C-terminus: Glycerol-3-phosphate dehydrogenase [NAD(+)] 2 (373 aa).

At Ser15 the chain carries Phosphoserine. NAD(+) is bound by residues 31–36 (GSGNWG), Phe123, Lys146, and Ala179. Position 146 (Lys146) interacts with substrate. The active-site Proton acceptor is Lys236. NAD(+) contacts are provided by Arg300 and Gln329. Residue 300–301 (RN) participates in substrate binding.

It belongs to the NAD-dependent glycerol-3-phosphate dehydrogenase family.

The protein localises to the cytoplasm. The enzyme catalyses sn-glycerol 3-phosphate + NAD(+) = dihydroxyacetone phosphate + NADH + H(+). This is Glycerol-3-phosphate dehydrogenase [NAD(+)] 2 (gpd2) from Schizosaccharomyces pombe (strain 972 / ATCC 24843) (Fission yeast).